Reading from the N-terminus, the 128-residue chain is Large ribosomal subunit protein uL22 (128 aa).

This sequence belongs to the universal ribosomal protein uL22 family. As to quaternary structure, part of the 50S ribosomal subunit.

Its function is as follows. This protein binds specifically to 23S rRNA; its binding is stimulated by other ribosomal proteins, e.g. L4, L17, and L20. It is important during the early stages of 50S assembly. It makes multiple contacts with different domains of the 23S rRNA in the assembled 50S subunit and ribosome. Functionally, the globular domain of the protein is located near the polypeptide exit tunnel on the outside of the subunit, while an extended beta-hairpin is found that lines the wall of the exit tunnel in the center of the 70S ribosome. The polypeptide is Large ribosomal subunit protein uL22 (Methylobacterium radiotolerans (strain ATCC 27329 / DSM 1819 / JCM 2831 / NBRC 15690 / NCIMB 10815 / 0-1)).